Reading from the N-terminus, the 679-residue chain is DNA-directed RNA polymerase subunit beta' (679 aa).

The Zn(2+) site is built by C69, C71, C87, and C90. Mg(2+) is bound by residues D489, D491, and D493.

It belongs to the RNA polymerase beta' chain family. RpoC1 subfamily. As to quaternary structure, in plastids the minimal PEP RNA polymerase catalytic core is composed of four subunits: alpha, beta, beta', and beta''. When a (nuclear-encoded) sigma factor is associated with the core the holoenzyme is formed, which can initiate transcription. The cofactor is Mg(2+). Zn(2+) serves as cofactor.

The protein resides in the plastid. Its subcellular location is the chloroplast. The enzyme catalyses RNA(n) + a ribonucleoside 5'-triphosphate = RNA(n+1) + diphosphate. In terms of biological role, DNA-dependent RNA polymerase catalyzes the transcription of DNA into RNA using the four ribonucleoside triphosphates as substrates. In Phalaenopsis aphrodite subsp. formosana (Moth orchid), this protein is DNA-directed RNA polymerase subunit beta'.